The following is a 358-amino-acid chain: MSSFTSKFADELIANAAYIGTPGKGILAADESTGTIGKRLASINVENVESNRRALRELLFTTPGALPCLSGVILFEETLYQKSSDGTPFVDMLKSAGVLPGIKVDKGTVELAGTNGETTTQGLDGLGDRCKKYYEAGARFAKWRAVLKIGVNEPSQLAIHENAYGLARYAVICQENGLVPIVEPEILVDGSHDIQKCAAVTERVLAACYKALSDHHVLLEGTLLKPNMVTPGSESAKVAPEVIAEHTVRALQRTVPAAVPAIVFLSGGQSEEEATRNLNAMNQLKTKKPWSLSFSFGRALQQSTLKTWGGKEENVKKAQEAFLVRCKANSEATLGAYKGDAKLGEGAAESLHVKDYKY.

S2 bears the N-acetylserine mark. Substrate is bound at residue R39. Position 68 is an S-glutathionyl cysteine; transient (C68). Residue C173 is modified to S-glutathionyl cysteine; transient; alternate. S-nitrosocysteine; transient; alternate is present on C173. E183 functions as the Proton acceptor in the catalytic mechanism. K225 serves as the catalytic Schiff-base intermediate with dihydroxyacetone-P. Substrate contacts are provided by residues 266–268 (SGG) and R298. S350 carries the post-translational modification Phosphoserine. K354 is subject to N6,N6,N6-trimethyllysine.

Belongs to the class I fructose-bisphosphate aldolase family. Homotetramer. Interacts with TRX1 and TRX3. Interacts with GAPC1 and VDAC3. S-glutathionylated at Cys-68 and Cys-173. Post-translationally, S-nitrosylated at Cys-173. Expressed in roots, rosettes leaves, cauline leaves, stems and flowers.

It is found in the cytoplasm. The protein localises to the cytosol. The protein resides in the nucleus. Its subcellular location is the mitochondrion. It carries out the reaction beta-D-fructose 1,6-bisphosphate = D-glyceraldehyde 3-phosphate + dihydroxyacetone phosphate. The protein operates within carbohydrate degradation; glycolysis; D-glyceraldehyde 3-phosphate and glycerone phosphate from D-glucose: step 4/4. Total and irreversible inhibition by S-nitrosoglutathione (GSNO). Partial and reversible inhibition by oxidized glutathione (GSSG). Functionally, fructose-bisphosphate aldolase that plays a key role in glycolysis and gluconeogenesis. Associates with GAPC1 to the outer mitochondrial membrane, in a redox-dependent manner, leading to binding and bundling of actin. Actin binding and bundling occurs under oxidizing conditions and is reversible under reducing conditions. May be part of a redox-dependent retrograde signal transduction network for adaptation upon oxidative stress. The sequence is that of Fructose-bisphosphate aldolase 6, cytosolic from Arabidopsis thaliana (Mouse-ear cress).